Reading from the N-terminus, the 131-residue chain is D-ribose pyranase (131 aa).

His-20 (proton donor) is an active-site residue. Residues Asp-28, His-98, and 120 to 122 each bind substrate; that span reads YAN.

The protein belongs to the RbsD / FucU family. RbsD subfamily. In terms of assembly, homodecamer.

The protein resides in the cytoplasm. The enzyme catalyses beta-D-ribopyranose = beta-D-ribofuranose. It functions in the pathway carbohydrate metabolism; D-ribose degradation; D-ribose 5-phosphate from beta-D-ribopyranose: step 1/2. In terms of biological role, catalyzes the interconversion of beta-pyran and beta-furan forms of D-ribose. This chain is D-ribose pyranase, found in Bacillus cereus (strain G9842).